The sequence spans 468 residues: Argininosuccinate lyase (468 aa).

It belongs to the lyase 1 family. Argininosuccinate lyase subfamily.

It is found in the cytoplasm. It catalyses the reaction 2-(N(omega)-L-arginino)succinate = fumarate + L-arginine. Its pathway is amino-acid biosynthesis; L-arginine biosynthesis; L-arginine from L-ornithine and carbamoyl phosphate: step 3/3. This chain is Argininosuccinate lyase, found in Paraburkholderia phymatum (strain DSM 17167 / CIP 108236 / LMG 21445 / STM815) (Burkholderia phymatum).